Reading from the N-terminus, the 723-residue chain is Catalase-peroxidase (723 aa).

Residues 98–226 (WHSAGSYRVG…LAAVMMGLIY (129 aa)) constitute a cross-link (tryptophyl-tyrosyl-methioninium (Trp-Tyr) (with M-252)). The active-site Proton acceptor is the histidine 99. A cross-link (tryptophyl-tyrosyl-methioninium (Tyr-Met) (with W-98)) is located at residues 226–252 (YVNPEGVDGNPDPLKTAKDMRVTFARM). Histidine 267 lines the heme b pocket.

The protein belongs to the peroxidase family. Peroxidase/catalase subfamily. Homodimer or homotetramer. Heme b is required as a cofactor. Post-translationally, formation of the three residue Trp-Tyr-Met cross-link is important for the catalase, but not the peroxidase activity of the enzyme.

It carries out the reaction H2O2 + AH2 = A + 2 H2O. The catalysed reaction is 2 H2O2 = O2 + 2 H2O. Its function is as follows. Bifunctional enzyme with both catalase and broad-spectrum peroxidase activity. This is Catalase-peroxidase from Vibrio vulnificus (strain CMCP6).